The chain runs to 460 residues: Ammonium transporter Rh type B (460 aa).

Residues 1–10 are Cytoplasmic-facing; that stretch reads MTGYSTNMRI. A helical membrane pass occupies residues 11-31; sequence KLPVFCLLLEFITIILFAVFV. Residues 32–62 are Extracellular-facing; sequence RYDHESDAKQWHDEMRNHSVQNAENDFYFRY. Asn-48 carries an N-linked (GlcNAc...) asparagine glycan. A helical transmembrane segment spans residues 63–83; the sequence is PSFQDVHVMIFIGFGFLMTFL. Topologically, residues 84 to 87 are cytoplasmic; the sequence is KRYG. The helical transmembrane segment at 88-108 threads the bilayer; that stretch reads FSSVAFNFLIAAFGLQWSTLI. Residues 109 to 125 lie on the Extracellular side of the membrane; sequence QGFFHGFHDGKIHVGIE. The helical transmembrane segment at 126-146 threads the bilayer; it reads SMINADFCTGAVLISFGAVLG. Over 147 to 150 the chain is Cytoplasmic; the sequence is KTSP. The helical transmembrane segment at 151 to 171 threads the bilayer; that stretch reads VQLIVMTLIEVTLFGINEYII. At 172 to 179 the chain is on the extracellular side; that stretch reads LNIVGAKD. The helical transmembrane segment at 180–202 threads the bilayer; it reads AGGSMTIHTFGAYFGLIVSRVLY. At 203 to 220 the chain is on the cytoplasmic side; that stretch reads RDDLEKSRQREGSVYHSD. A helical membrane pass occupies residues 221–241; the sequence is LFAMIGTIYLWMFWPSFNSAI. Residues 242-252 lie on the Extracellular side of the membrane; the sequence is TAHGDDQHRTV. A helical transmembrane segment spans residues 253–273; it reads MNTYYSLAACTLATFGFSALL. Residues 274–283 are Cytoplasmic-facing; sequence NGEGKLDMVH. Residues 284–304 form a helical membrane-spanning segment; the sequence is IQNAALAGGVAVGTSGEMMLT. A topological domain (extracellular) is located at residue Pro-305. A helical transmembrane segment spans residues 306-326; the sequence is FGAMIAGTLAGMISVLGYKYL. Residues 327–347 are Cytoplasmic-facing; that stretch reads TPVLDSKLKIQDTCGVHNLHG. Residues 348-368 traverse the membrane as a helical segment; that stretch reads MPGILGALIGAIVALFATAEI. Topologically, residues 369 to 394 are extracellular; sequence YGAGMEDVFPLISDGSRTAKQQSLYQ. Residues 395-415 form a helical membrane-spanning segment; sequence FLALLVALGFAILGGLVVGFI. Residues 416–460 are Cytoplasmic-facing; that stretch reads LKLPIFGTPSDAECFEDAVYWEVPGGEGHQQLTVVINNEDPDTQA.

It belongs to the ammonium transporter (TC 2.A.49) family. Rh subfamily.

It is found in the basolateral cell membrane. The protein resides in the cytoplasmic vesicle membrane. Functionally, functions as a specific ammonium transporter. The chain is Ammonium transporter Rh type B (rhbg) from Xenopus tropicalis (Western clawed frog).